A 148-amino-acid polypeptide reads, in one-letter code: Probable glycine cleavage system H protein 2 (148 aa).

In terms of domain architecture, Lipoyl-binding spans 32–114 (VIVVGITDIA…YGKGWLVKMK (83 aa)). At K73 the chain carries N6-lipoyllysine.

It belongs to the GcvH family. The glycine cleavage system is composed of four proteins: P, T, L and H. (R)-lipoate is required as a cofactor.

The glycine cleavage system catalyzes the degradation of glycine. The H protein shuttles the methylamine group of glycine from the P protein to the T protein. The polypeptide is Probable glycine cleavage system H protein 2 (Sulfurisphaera tokodaii (strain DSM 16993 / JCM 10545 / NBRC 100140 / 7) (Sulfolobus tokodaii)).